Reading from the N-terminus, the 160-residue chain is 2-C-methyl-D-erythritol 2,4-cyclodiphosphate synthase (160 aa).

Residues aspartate 11 and histidine 13 each contribute to the a divalent metal cation site. 4-CDP-2-C-methyl-D-erythritol 2-phosphate-binding positions include 11–13 (DIH) and 37–38 (HS). Histidine 45 contacts a divalent metal cation. Residues 59–61 (DIG), 135–138 (TTNE), and arginine 145 contribute to the 4-CDP-2-C-methyl-D-erythritol 2-phosphate site.

The protein belongs to the IspF family. As to quaternary structure, homotrimer. The cofactor is a divalent metal cation.

It carries out the reaction 4-CDP-2-C-methyl-D-erythritol 2-phosphate = 2-C-methyl-D-erythritol 2,4-cyclic diphosphate + CMP. It functions in the pathway isoprenoid biosynthesis; isopentenyl diphosphate biosynthesis via DXP pathway; isopentenyl diphosphate from 1-deoxy-D-xylulose 5-phosphate: step 4/6. Its function is as follows. Involved in the biosynthesis of isopentenyl diphosphate (IPP) and dimethylallyl diphosphate (DMAPP), two major building blocks of isoprenoid compounds. Catalyzes the conversion of 4-diphosphocytidyl-2-C-methyl-D-erythritol 2-phosphate (CDP-ME2P) to 2-C-methyl-D-erythritol 2,4-cyclodiphosphate (ME-CPP) with a corresponding release of cytidine 5-monophosphate (CMP). The sequence is that of 2-C-methyl-D-erythritol 2,4-cyclodiphosphate synthase from Nostoc punctiforme (strain ATCC 29133 / PCC 73102).